A 142-amino-acid chain; its full sequence is Hemoglobin subunit alpha-1 (142 aa).

One can recognise a Globin domain in the interval 2 to 142 (VLSADDKSNV…VSTVLTSKYR (141 aa)). H59 provides a ligand contact to O2. H88 is a binding site for heme b.

This sequence belongs to the globin family. As to quaternary structure, heterotetramer of two alpha chains and two beta chains. Red blood cells.

Its function is as follows. Involved in oxygen transport from the lung to the various peripheral tissues. Hemopressin acts as an antagonist peptide of the cannabinoid receptor CNR1. Hemopressin-binding efficiently blocks cannabinoid receptor CNR1 and subsequent signaling. The chain is Hemoglobin subunit alpha-1 (HBA1) from Equus quagga burchellii (Burchell's zebra).